A 61-amino-acid polypeptide reads, in one-letter code: Large ribosomal subunit protein uL30 (61 aa).

It belongs to the universal ribosomal protein uL30 family. In terms of assembly, part of the 50S ribosomal subunit.

The chain is Large ribosomal subunit protein uL30 from Maricaulis maris (strain MCS10) (Caulobacter maris).